We begin with the raw amino-acid sequence, 261 residues long: DNA-directed RNA polymerase subunit Rpo3 (261 aa).

Belongs to the archaeal Rpo3/eukaryotic RPB3 RNA polymerase subunit family. In terms of assembly, part of the RNA polymerase complex.

It localises to the cytoplasm. It carries out the reaction RNA(n) + a ribonucleoside 5'-triphosphate = RNA(n+1) + diphosphate. Functionally, DNA-dependent RNA polymerase (RNAP) catalyzes the transcription of DNA into RNA using the four ribonucleoside triphosphates as substrates. The protein is DNA-directed RNA polymerase subunit Rpo3 of Pyrococcus furiosus (strain ATCC 43587 / DSM 3638 / JCM 8422 / Vc1).